A 149-amino-acid polypeptide reads, in one-letter code: Large ribosomal subunit protein bL9 (149 aa).

The protein belongs to the bacterial ribosomal protein bL9 family.

Functionally, binds to the 23S rRNA. The polypeptide is Large ribosomal subunit protein bL9 (Helicobacter pylori (strain P12)).